The primary structure comprises 143 residues: Transmembrane protein 80 (143 aa).

A run of 4 helical transmembrane segments spans residues 22 to 42 (LLCL…LLLV), 47 to 67 (VFTY…LMGI), 88 to 108 (LAAS…FLLW), and 122 to 142 (PLLA…AAFV).

It localises to the membrane. The protein localises to the cell projection. Its subcellular location is the cilium. This is Transmembrane protein 80 (TMEM80) from Bos taurus (Bovine).